Consider the following 410-residue polypeptide: LL-diaminopimelate aminotransferase (410 aa).

The substrate site is built by tyrosine 15 and glycine 42. Residues tyrosine 72, 108 to 109 (SK), tyrosine 132, asparagine 187, tyrosine 218, and 246 to 248 (SFS) each bind pyridoxal 5'-phosphate. The substrate site is built by lysine 109, tyrosine 132, and asparagine 187. An N6-(pyridoxal phosphate)lysine modification is found at lysine 249. Arginine 257 and asparagine 292 together coordinate pyridoxal 5'-phosphate. Substrate is bound by residues asparagine 292 and arginine 388.

Belongs to the class-I pyridoxal-phosphate-dependent aminotransferase family. LL-diaminopimelate aminotransferase subfamily. In terms of assembly, homodimer. The cofactor is pyridoxal 5'-phosphate.

It carries out the reaction (2S,6S)-2,6-diaminopimelate + 2-oxoglutarate = (S)-2,3,4,5-tetrahydrodipicolinate + L-glutamate + H2O + H(+). It participates in amino-acid biosynthesis; L-lysine biosynthesis via DAP pathway; LL-2,6-diaminopimelate from (S)-tetrahydrodipicolinate (aminotransferase route): step 1/1. Involved in the synthesis of meso-diaminopimelate (m-DAP or DL-DAP), required for both lysine and peptidoglycan biosynthesis. Catalyzes the direct conversion of tetrahydrodipicolinate to LL-diaminopimelate. In Geobacter metallireducens (strain ATCC 53774 / DSM 7210 / GS-15), this protein is LL-diaminopimelate aminotransferase.